The following is a 577-amino-acid chain: Adenine deaminase (577 aa).

It belongs to the metallo-dependent hydrolases superfamily. Adenine deaminase family. Mn(2+) serves as cofactor.

The catalysed reaction is adenine + H2O + H(+) = hypoxanthine + NH4(+). This Kosmotoga olearia (strain ATCC BAA-1733 / DSM 21960 / TBF 19.5.1) protein is Adenine deaminase.